Reading from the N-terminus, the 68-residue chain is Large ribosomal subunit protein bL35 (68 aa).

Positions 29–68 are disordered; sequence GGVSHYNTKKSSKRKRQGRKPQYVPKNLEHKVKALLPNDV. Positions 35-47 are enriched in basic residues; sequence NTKKSSKRKRQGR.

Belongs to the bacterial ribosomal protein bL35 family.

The sequence is that of Large ribosomal subunit protein bL35 from Sulfurihydrogenibium sp. (strain YO3AOP1).